The following is a 350-amino-acid chain: GTPase Obg (350 aa).

Positions 1-159 constitute an Obg domain; that stretch reads MRFIDQTEIF…FRLHLELKLL (159 aa). The OBG-type G domain occupies 160–328; it reads AEVGIIGLPN…LLQQVWEELD (169 aa). GTP-binding positions include 166-173, 191-195, 213-216, 280-283, and 309-311; these read GLPNAGKS, FTTLI, DIPG, NKID, and SAV. The Mg(2+) site is built by Ser173 and Thr193.

It belongs to the TRAFAC class OBG-HflX-like GTPase superfamily. OBG GTPase family. Monomer. Mg(2+) serves as cofactor.

The protein resides in the cytoplasm. Its function is as follows. An essential GTPase which binds GTP, GDP and possibly (p)ppGpp with moderate affinity, with high nucleotide exchange rates and a fairly low GTP hydrolysis rate. Plays a role in control of the cell cycle, stress response, ribosome biogenesis and in those bacteria that undergo differentiation, in morphogenesis control. This is GTPase Obg from Acaryochloris marina (strain MBIC 11017).